We begin with the raw amino-acid sequence, 352 residues long: Guanine nucleotide-binding protein alpha-7 subunit (352 aa).

Glycine 2 is lipidated: N-myristoyl glycine. A lipid anchor (S-palmitoyl cysteine) is attached at cysteine 4. The G-alpha domain occupies 32-352; that stretch reads RIIKLLLLGA…AKNLKSMGLC (321 aa). The G1 motif stretch occupies residues 35 to 48; sequence KLLLLGAGESGKST. GTP is bound by residues 40-47, 174-180, 199-203, 268-271, and alanine 324; these read GAGESGKS, LRTRIKT, DVGGQ, and NKKD. Mg(2+)-binding residues include serine 47 and threonine 180. Residues 172–180 form a G2 motif region; that stretch reads DLLRTRIKT. The segment at 195–204 is G3 motif; it reads FRVIDVGGQR. The G4 motif stretch occupies residues 264–271; it reads ILFLNKKD. Residues 322-327 are G5 motif; the sequence is TCATDT.

It belongs to the G-alpha family. G(i/o/t/z) subfamily. As to quaternary structure, g proteins are composed of 3 units; alpha, beta and gamma. The alpha chain contains the guanine nucleotide binding site.

In terms of biological role, guanine nucleotide-binding proteins (G proteins) are involved as modulators or transducers in various transmembrane signaling systems. The chain is Guanine nucleotide-binding protein alpha-7 subunit (gpa-7) from Caenorhabditis elegans.